We begin with the raw amino-acid sequence, 397 residues long: Sporulation-specific protein 20 (397 aa).

Residues 1–26 (MGFRKILASKSHHSRHHNQHHKNLKL) form a disordered region. An inhibitory region region spans residues 4–50 (RKILASKSHHSRHHNQHHKNLKLQNHRYVLISNITGSHETKYLSPFR). Residues 10 to 26 (KSHHSRHHNQHHKNLKL) show a composition bias toward basic residues. The tract at residues 51-95 (MDNCSGSRRRDRLHVKLKSLRNKIHKQLHPNCRFDDATKTSDDKC) is positive regulatory region. Positions 330–392 (NQMEIDLYGN…QAKRYRLEKV (63 aa)) constitute a t-SNARE coiled-coil homology domain.

Belongs to the SNAP-25 family. In terms of assembly, interacts with the t-SNARE SSO1 and the v-SNARE SNC2.

It is found in the cell membrane. Its subcellular location is the prospore membrane. In terms of biological role, required to maintain the prospore membrane to the nucleus during sporulation in order to capture the daughter nuclei and form the spores. Mediates the fusion of exocytic vesicles with the plasma membrane during sporulation through its interactions with the t-SNARE SSO1 and v-SNARE SNC2. In Saccharomyces cerevisiae (strain ATCC 204508 / S288c) (Baker's yeast), this protein is Sporulation-specific protein 20 (SPO20).